Here is a 532-residue protein sequence, read N- to C-terminus: Collagen alpha-1(XXIII) chain (532 aa).

At 1–23 the chain is on the cytoplasmic side; sequence MGAGERAAGGGGTQDPGAGCGAR. A helical; Signal-anchor for type II membrane protein membrane pass occupies residues 24–45; sequence ALGALCLLLSVGSATACLLLGA. At 46–532 the chain is on the extracellular side; that stretch reads QAAALHGRVA…GLPVPGCWHK (487 aa). The tract at residues 102–532 is disordered; the sequence is PSECICPPGP…GLPVPGCWHK (431 aa). 4 Collagen-like domains span residues 108 to 163, 173 to 232, 242 to 297, and 313 to 372; these read PPGP…FGPR, GPPG…PGKK, GLPG…EQGD, and GPPG…MGLS. 2 stretches are compositionally biased toward low complexity: residues 129 to 145 and 157 to 172; these read QSGR…DGKP and PGDF…DGAA. Composition is skewed to pro residues over residues 174-184, 241-250, and 314-326; these read PPGPPGPPGAR, PGLPGPPGPK, and PPGP…PPGI. Basic and acidic residues-rich tracts occupy residues 342–354 and 380–393; these read DGEK…KGDP and PKGE…DHLQ. The span at 403-414 shows a compositional bias: pro residues; it reads PGPPGPPGPPGP. Collagen-like domains follow at residues 404-452 and 455-514; these read GPPG…GPPG and GLPG…PGLD. 2 stretches are compositionally biased toward basic and acidic residues: residues 427-441 and 478-495; these read DGAK…ERGP and RGEK…ERGV.

As to quaternary structure, homotrimer. Post-translationally, undergoes proteolytic cleavage by furin protease to yield a 60 kDa soluble form that forms a homotrimer and exhibits a low affinity interaction with heparin.

Its subcellular location is the cell membrane. The protein is Collagen alpha-1(XXIII) chain (Col23a1) of Rattus norvegicus (Rat).